We begin with the raw amino-acid sequence, 575 residues long: Adenine deaminase 1 (575 aa).

The protein belongs to the metallo-dependent hydrolases superfamily. Adenine deaminase family. Mn(2+) is required as a cofactor.

The catalysed reaction is adenine + H2O + H(+) = hypoxanthine + NH4(+). This chain is Adenine deaminase 1, found in Agrobacterium fabrum (strain C58 / ATCC 33970) (Agrobacterium tumefaciens (strain C58)).